The primary structure comprises 248 residues: Probable transcriptional regulatory protein Ccel_0181 (248 aa).

This sequence belongs to the TACO1 family.

It is found in the cytoplasm. This Ruminiclostridium cellulolyticum (strain ATCC 35319 / DSM 5812 / JCM 6584 / H10) (Clostridium cellulolyticum) protein is Probable transcriptional regulatory protein Ccel_0181.